A 100-amino-acid chain; its full sequence is Aspartyl/glutamyl-tRNA(Asn/Gln) amidotransferase subunit C (100 aa).

Belongs to the GatC family. Heterotrimer of A, B and C subunits.

The enzyme catalyses L-glutamyl-tRNA(Gln) + L-glutamine + ATP + H2O = L-glutaminyl-tRNA(Gln) + L-glutamate + ADP + phosphate + H(+). The catalysed reaction is L-aspartyl-tRNA(Asn) + L-glutamine + ATP + H2O = L-asparaginyl-tRNA(Asn) + L-glutamate + ADP + phosphate + 2 H(+). Allows the formation of correctly charged Asn-tRNA(Asn) or Gln-tRNA(Gln) through the transamidation of misacylated Asp-tRNA(Asn) or Glu-tRNA(Gln) in organisms which lack either or both of asparaginyl-tRNA or glutaminyl-tRNA synthetases. The reaction takes place in the presence of glutamine and ATP through an activated phospho-Asp-tRNA(Asn) or phospho-Glu-tRNA(Gln). This chain is Aspartyl/glutamyl-tRNA(Asn/Gln) amidotransferase subunit C, found in Staphylococcus aureus (strain Newman).